The sequence spans 452 residues: 51.5 kDa protein (452 aa).

Residues Met1–Gly126 enclose the Helicase ATP-binding domain. A Helicase C-terminal domain is found at Asp177–Asp333. The segment at Cys331–Cys348 is a zinc-finger region.

May play a role in either regulating bacteriophages replication or specifying expression of its own genes. The sequence is that of 51.5 kDa protein from Lactococcus (lactic streptococci).